Reading from the N-terminus, the 299-residue chain is HTH-type transcriptional regulator CrgA (299 aa).

Residues 1–60 form the HTH lysR-type domain; it reads MKTNSEELTVFVQVVESGSFSRAAEQLAMANSAVSRIVKRLEEKLGVNLLNRTTRQLSLT. Positions 20–39 form a DNA-binding region, H-T-H motif; that stretch reads FSRAAEQLAMANSAVSRIVK.

It belongs to the LysR transcriptional regulatory family. As to quaternary structure, forms oligomers. Forms an octomeric ring-like structure in solution. May form hexadecamers when bound to target DNA.

Activation and repression activities are enhanced by the addition of alpha-methylene-gamma-butyrolactone (MBL), an inducer of NADPH:quinone oxidoreductase. In terms of biological role, regulatory protein that activates transcription of mdaB, encoding a NADPH:quinone oxidoreductase, and represses its own transcription. Under the same experimental conditions, no regulation of transcription of pilus and capsule genes is detected. This chain is HTH-type transcriptional regulator CrgA, found in Neisseria meningitidis serogroup B (strain ATCC BAA-335 / MC58).